The following is a 348-amino-acid chain: tRNA N6-adenosine threonylcarbamoyltransferase (348 aa).

2 residues coordinate Fe cation: H119 and H123. Residues 141–145 (LVSGG), D174, G187, D191, and N280 each bind substrate. D310 contributes to the Fe cation binding site.

It belongs to the KAE1 / TsaD family. Fe(2+) is required as a cofactor.

It localises to the cytoplasm. It catalyses the reaction L-threonylcarbamoyladenylate + adenosine(37) in tRNA = N(6)-L-threonylcarbamoyladenosine(37) in tRNA + AMP + H(+). Functionally, required for the formation of a threonylcarbamoyl group on adenosine at position 37 (t(6)A37) in tRNAs that read codons beginning with adenine. Is involved in the transfer of the threonylcarbamoyl moiety of threonylcarbamoyl-AMP (TC-AMP) to the N6 group of A37, together with TsaE and TsaB. TsaD likely plays a direct catalytic role in this reaction. This chain is tRNA N6-adenosine threonylcarbamoyltransferase, found in Enterococcus faecalis (strain ATCC 700802 / V583).